The sequence spans 251 residues: 3-deoxy-manno-octulosonate cytidylyltransferase (251 aa).

Belongs to the KdsB family.

The protein localises to the cytoplasm. The enzyme catalyses 3-deoxy-alpha-D-manno-oct-2-ulosonate + CTP = CMP-3-deoxy-beta-D-manno-octulosonate + diphosphate. It participates in nucleotide-sugar biosynthesis; CMP-3-deoxy-D-manno-octulosonate biosynthesis; CMP-3-deoxy-D-manno-octulosonate from 3-deoxy-D-manno-octulosonate and CTP: step 1/1. It functions in the pathway bacterial outer membrane biogenesis; lipopolysaccharide biosynthesis. Functionally, activates KDO (a required 8-carbon sugar) for incorporation into bacterial lipopolysaccharide in Gram-negative bacteria. This Chromobacterium violaceum (strain ATCC 12472 / DSM 30191 / JCM 1249 / CCUG 213 / NBRC 12614 / NCIMB 9131 / NCTC 9757 / MK) protein is 3-deoxy-manno-octulosonate cytidylyltransferase.